The following is a 427-amino-acid chain: Adenylosuccinate synthetase (427 aa).

GTP-binding positions include glycine 12–lysine 18 and glycine 40–threonine 42. The Proton acceptor role is filled by aspartate 13. The Mg(2+) site is built by aspartate 13 and glycine 40. IMP is bound by residues aspartate 13 to lysine 16, asparagine 38 to histidine 41, threonine 128, arginine 142, glutamine 223, threonine 238, and arginine 302. The active-site Proton donor is histidine 41. Threonine 298–arginine 304 contacts substrate. GTP is bound by residues arginine 304, lysine 330–aspartate 332, and alanine 412–glycine 414.

Belongs to the adenylosuccinate synthetase family. As to quaternary structure, homodimer. It depends on Mg(2+) as a cofactor.

Its subcellular location is the cytoplasm. It carries out the reaction IMP + L-aspartate + GTP = N(6)-(1,2-dicarboxyethyl)-AMP + GDP + phosphate + 2 H(+). It functions in the pathway purine metabolism; AMP biosynthesis via de novo pathway; AMP from IMP: step 1/2. Its function is as follows. Plays an important role in the de novo pathway of purine nucleotide biosynthesis. Catalyzes the first committed step in the biosynthesis of AMP from IMP. The polypeptide is Adenylosuccinate synthetase (Desulfitobacterium hafniense (strain DSM 10664 / DCB-2)).